Here is a 168-residue protein sequence, read N- to C-terminus: Cytochrome c-type biogenesis protein CcmE (168 aa).

Residues 1 to 7 (MTRKQRR) are Cytoplasmic-facing. The chain crosses the membrane as a helical; Signal-anchor for type II membrane protein span at residues 8 to 28 (LMLIGVCGAVLAVALGLVLWA). Over 29 to 168 (MRGTIVFFRS…SGEKPALRQQ (140 aa)) the chain is Periplasmic. Residues H122 and Y126 each contribute to the heme site. The segment at 134 to 168 (ALKKQGHWQGEAKHPGGTAPAPQTASGEKPALRQQ) is disordered.

It belongs to the CcmE/CycJ family.

It localises to the cell inner membrane. Its function is as follows. Heme chaperone required for the biogenesis of c-type cytochromes. Transiently binds heme delivered by CcmC and transfers the heme to apo-cytochromes in a process facilitated by CcmF and CcmH. In Methylobacterium nodulans (strain LMG 21967 / CNCM I-2342 / ORS 2060), this protein is Cytochrome c-type biogenesis protein CcmE.